The primary structure comprises 635 residues: Iron transport multicopper oxidase FET3 (635 aa).

A signal peptide spans 1 to 17; it reads MMVPLLLSTYFITAVYG. The Extracellular segment spans residues 18–559; it reads ATHTFHWTTG…KSIPTGFTKK (542 aa). Plastocyanin-like domains are found at residues 42-140 and 190-292; these read ITCN…FVIE and NLIL…LQLN. N-linked (GlcNAc...) asparagine glycans are attached at residues N70 and N73. Residues H77 and H79 each coordinate Cu cation. N109 is a glycosylation site (N-linked (GlcNAc...) asparagine). Residues H122 and H124 each contribute to the Cu cation site. N-linked (GlcNAc...) asparagine glycans are attached at residues N194, N198, N244, N265, N292, and N359. Positions 382 to 501 constitute a Plastocyanin-like 3 domain; the sequence is NPFIYGTNTN…QGLAVVMVED (120 aa). H413, H416, and H418 together coordinate Cu cation. Residue N443 is glycosylated (N-linked (GlcNAc...) asparagine). Residues H483, C484, H485, and H489 each contribute to the Cu cation site. N-linked (GlcNAc...) asparagine glycosylation occurs at N535. Residues 560-580 traverse the membrane as a helical segment; sequence GIIAMTFSCLAGVLGITMIAI. Residues 581–628 are Cytoplasmic-facing; that stretch reads YGFSEIPEPEIKVMRNLHLNPEDVLEKTSSSSVISASNSSSLEDSRNQ.

This sequence belongs to the multicopper oxidase family. The cofactor is Cu cation.

The protein resides in the cell membrane. In terms of biological role, iron transport multicopper ferroxidase required for Fe(2+) high affinity uptake. Required to oxidize Fe(2+) and release it from the transporter. Essential component of copper-dependent iron transport. The chain is Iron transport multicopper oxidase FET3 (FET3) from Candida glabrata (strain ATCC 2001 / BCRC 20586 / JCM 3761 / NBRC 0622 / NRRL Y-65 / CBS 138) (Yeast).